We begin with the raw amino-acid sequence, 232 residues long: Phosphatidylserine decarboxylase proenzyme (232 aa).

Catalysis depends on S190, which acts as the Schiff-base intermediate with substrate; via pyruvic acid. Position 190 is a pyruvic acid (Ser); by autocatalysis (S190).

The protein belongs to the phosphatidylserine decarboxylase family. PSD-A subfamily. Heterodimer of a large membrane-associated beta subunit and a small pyruvoyl-containing alpha subunit. Pyruvate is required as a cofactor. Is synthesized initially as an inactive proenzyme. Formation of the active enzyme involves a self-maturation process in which the active site pyruvoyl group is generated from an internal serine residue via an autocatalytic post-translational modification. Two non-identical subunits are generated from the proenzyme in this reaction, and the pyruvate is formed at the N-terminus of the alpha chain, which is derived from the carboxyl end of the proenzyme. The post-translation cleavage follows an unusual pathway, termed non-hydrolytic serinolysis, in which the side chain hydroxyl group of the serine supplies its oxygen atom to form the C-terminus of the beta chain, while the remainder of the serine residue undergoes an oxidative deamination to produce ammonia and the pyruvoyl prosthetic group on the alpha chain.

The protein resides in the cell membrane. It catalyses the reaction a 1,2-diacyl-sn-glycero-3-phospho-L-serine + H(+) = a 1,2-diacyl-sn-glycero-3-phosphoethanolamine + CO2. Its pathway is phospholipid metabolism; phosphatidylethanolamine biosynthesis; phosphatidylethanolamine from CDP-diacylglycerol: step 2/2. Its function is as follows. Catalyzes the formation of phosphatidylethanolamine (PtdEtn) from phosphatidylserine (PtdSer). The chain is Phosphatidylserine decarboxylase proenzyme from Rhodopseudomonas palustris (strain ATCC BAA-98 / CGA009).